A 396-amino-acid polypeptide reads, in one-letter code: Probable sugar efflux transporter (396 aa).

The next 12 helical transmembrane spans lie at 15-35 (VVTL…PVGL), 50-70 (VGIM…PFML), 81-101 (LICL…SWSF), 103-123 (VLVI…SITA), 136-156 (AQAL…GLPL), 170-190 (FFAI…LLPL), 209-229 (PALM…YTAY), 246-266 (FATA…VIFG), 275-295 (ALVS…LPAA), 299-319 (IHLG…GLGM), 333-353 (VAMA…ALVG), and 364-384 (MIGY…IIIF).

The protein belongs to the major facilitator superfamily. SotB (TC 2.A.1.2) family.

The protein localises to the cell inner membrane. Its function is as follows. Involved in the efflux of sugars. The physiological role may be the reduction of the intracellular concentration of toxic sugars or sugar metabolites. This is Probable sugar efflux transporter from Escherichia coli O6:K15:H31 (strain 536 / UPEC).